The chain runs to 310 residues: Quinolinate synthase (310 aa).

Iminosuccinate-binding residues include histidine 27 and serine 44. Cysteine 89 is a [4Fe-4S] cluster binding site. Residues 115 to 117 (YVN) and serine 132 each bind iminosuccinate. Cysteine 175 lines the [4Fe-4S] cluster pocket. Residues 201-203 (HPE) and threonine 222 contribute to the iminosuccinate site. Cysteine 267 contacts [4Fe-4S] cluster.

This sequence belongs to the quinolinate synthase family. Type 2 subfamily. [4Fe-4S] cluster serves as cofactor.

Its subcellular location is the cytoplasm. It carries out the reaction iminosuccinate + dihydroxyacetone phosphate = quinolinate + phosphate + 2 H2O + H(+). It functions in the pathway cofactor biosynthesis; NAD(+) biosynthesis; quinolinate from iminoaspartate: step 1/1. Catalyzes the condensation of iminoaspartate with dihydroxyacetone phosphate to form quinolinate. This is Quinolinate synthase from Thermus thermophilus (strain ATCC BAA-163 / DSM 7039 / HB27).